The primary structure comprises 178 residues: MAKRKKKEVFDWEDEDQEEIIWVSKSEIKRDAEDLKQLGEKIVNLTKANLAKIPLDESLLDAIELAQRLQKEARRRQLQYIGKLFRGIDVEPIREALDKIENKHNQQQAMLHKIEKVRDELVEKGDVALTDLLNDYPNGDRQQLRNLIRSAQKELEQNKPSKAYREIYQMLKVLMLED.

This sequence belongs to the DarP family.

It localises to the cytoplasm. Functionally, member of a network of 50S ribosomal subunit biogenesis factors which assembles along the 30S-50S interface, preventing incorrect 23S rRNA structures from forming. Promotes peptidyl transferase center (PTC) maturation. The sequence is that of Dual-action ribosomal maturation protein DarP from Haemophilus influenzae (strain PittEE).